Here is a 348-residue protein sequence, read N- to C-terminus: Dihydroorotase (348 aa).

His17 and His19 together coordinate Zn(2+). Substrate-binding positions include 19 to 21 (HLR) and Asn45. Lys103, His140, and His178 together coordinate Zn(2+). At Lys103 the chain carries N6-carboxylysine. His140 is a substrate binding site. Leu223 is a binding site for substrate. Zn(2+) is bound at residue Asp251. Asp251 is a catalytic residue. 2 residues coordinate substrate: His255 and Ala267.

Belongs to the metallo-dependent hydrolases superfamily. DHOase family. Class II DHOase subfamily. Homodimer. Requires Zn(2+) as cofactor.

It carries out the reaction (S)-dihydroorotate + H2O = N-carbamoyl-L-aspartate + H(+). It participates in pyrimidine metabolism; UMP biosynthesis via de novo pathway; (S)-dihydroorotate from bicarbonate: step 3/3. Catalyzes the reversible cyclization of carbamoyl aspartate to dihydroorotate. The chain is Dihydroorotase from Salmonella arizonae (strain ATCC BAA-731 / CDC346-86 / RSK2980).